An 86-amino-acid chain; its full sequence is uncharacterized protein (86 aa).

To C.jejuni CJ0253.

This is an uncharacterized protein from Helicobacter pylori (strain J99 / ATCC 700824) (Campylobacter pylori J99).